The following is a 734-amino-acid chain: MSTPCSGNEPATPTNTSPNNETSNSCLSMGVGVASNETNSSRELKIFKKVIRDPVLRAPFQEFLEQQFCAENLNFYLAVEQFKEIQDFQERSSFGRRIFDRYFAMNSTEPVNIDNSTSKRIRETVESGGFPLDTYDVAQYQILHLLKYDCWPRFLRSTNNSQPSFTDEELAADDEDKNGHSQPTSLNNTNEFEAAAQQSQPAPNAPAATKEKPSKQYSMPAEMTSPVKKNSLSPTHLRRCRPVEPKHCQLMIGDQFNTETVTLSDPTMSVRRWTQEMADAQGMDRMHVEVVDAETGSTIDPARQAIDALQSRALRLVPVVSFIIEFLPANFSFKNPASTPTKLVCIRARHSLSTGAVLRPLLHKYTLDPQVTRIVLNGSLEQVKRSCAVGQVSQKCLTVMSEAQYSDRVNAGKVSLPPRDPILSQLPSTIYEQNNFPFHQNGDISYCEIPNESERNKHAHLQHDGPNAAHQQKEYTLSIFNKFVRKASHAVSKSDPNPSAGTSQDRMASGVYSPATGGPSFASRAAAGTNFGGSANQVNAGSASTSSNNVSEPSKNRLSIFKSKTEKKVVKPESEKEKLKPRSDDIPTTSTSTPMAVETKPNGSRTTEEPLKRMGKSGDDGSQEPQGIRHPAIFSTKIGDEAAAAAAGASPSTSAPSTSTSVQTKTTTSPTKSPTSTTITTSGTTTSATSSVATAPPPVLHAMRSASTPATSSQLTGGGGGNPRESSWQTAAYV.

Residues 1–24 are disordered; sequence MSTPCSGNEPATPTNTSPNNETSN. The span at 8–24 shows a compositional bias: low complexity; it reads NEPATPTNTSPNNETSN. In terms of domain architecture, RGS spans 46-157; that stretch reads IFKKVIRDPV…YDCWPRFLRS (112 aa). Disordered regions lie at residues 162–236, 489–515, and 538–734; these read QPSF…SPTH, HAVSKSDPNPSAGTSQDRMASGVYSPA, and VNAG…AAYV. Residues 166-176 are compositionally biased toward acidic residues; sequence TDEELAADDED. Positions 180–191 are enriched in polar residues; sequence HSQPTSLNNTNE. Over residues 194 to 208 the composition is skewed to low complexity; sequence AAAQQSQPAPNAPAA. Composition is skewed to polar residues over residues 494–506 and 538–557; these read SDPNPSAGTSQDR and VNAGSASTSSNNVSEPSKNR. Basic and acidic residues-rich tracts occupy residues 563 to 585 and 606 to 619; these read SKTEKKVVKPESEKEKLKPRSDD and TTEEPLKRMGKSGD. Positions 642–694 are enriched in low complexity; that stretch reads AAAAAAGASPSTSAPSTSTSVQTKTTTSPTKSPTSTTITTSGTTTSATSSVAT. Polar residues-rich tracts occupy residues 705–715 and 724–734; these read SASTPATSSQL and RESSWQTAAYV.

The chain is Regulator of G-protein signaling rgs-6 from Caenorhabditis elegans.